A 760-amino-acid polypeptide reads, in one-letter code: uncharacterized protein (760 aa).

The span at 578–587 (RNRKQSKLRI) shows a compositional bias: basic residues. A disordered region spans residues 578 to 604 (RNRKQSKLRISKQQEIQPQKEESVKKE). The span at 595–604 (PQKEESVKKE) shows a compositional bias: basic and acidic residues.

The protein resides in the mitochondrion. This is an uncharacterized protein from Dictyostelium citrinum (Slime mold).